The sequence spans 513 residues: MQLNSTEISDLIKQRIQQFDVVSEARNEGTIVAVSDGIIRINGLADVMQGEMIELPGGCFAIALNLERDSVGAVVMGPYANLAEGDKVRTTGRILEVPVGRGLLGRVVNTLGEPIDGKGPIDNDGFSPVEVIAPGVIERKSVSQPIQTGYKAVDAMIPIGRGQRELIIGDRQTGKTAMAIDAIINQKESGIKCVYVAIGQKASTIANVVRKLEEHGALANTIVVVASASEAAALQYLAPYSGCSMGEYFRDRGEDSLIVYDDLSKQAVAYRQISLLLKRPPGREAYPGDVFYLHSRLLERASRVNVNYVEKFTKGAVTGQTGSLTALPIIETQAGDVSAFVPTNVISITDGQIFLETDLFNSGLRPAVNPGISVSRVGGAAQTKIIKKLSGGIRTALAQYRELAAFSQFASDLDDATRAQLEHGERVTELMKQKQYAPMSVAAQSVSIFAAEKGYLKGVALNEIGRFEASLLSYMNSQHTDLMNTINATGDYNADIEGELKAGMDKFIETQTW.

ATP is bound at residue 169–176; the sequence is GDRQTGKT.

It belongs to the ATPase alpha/beta chains family. In terms of assembly, F-type ATPases have 2 components, CF(1) - the catalytic core - and CF(0) - the membrane proton channel. CF(1) has five subunits: alpha(3), beta(3), gamma(1), delta(1), epsilon(1). CF(0) has three main subunits: a(1), b(2) and c(9-12). The alpha and beta chains form an alternating ring which encloses part of the gamma chain. CF(1) is attached to CF(0) by a central stalk formed by the gamma and epsilon chains, while a peripheral stalk is formed by the delta and b chains.

It is found in the cell inner membrane. The enzyme catalyses ATP + H2O + 4 H(+)(in) = ADP + phosphate + 5 H(+)(out). Produces ATP from ADP in the presence of a proton gradient across the membrane. The alpha chain is a regulatory subunit. This is ATP synthase subunit alpha 2 from Shewanella frigidimarina (strain NCIMB 400).